Consider the following 184-residue polypeptide: MDLSSLRPAKGAVKNKKRVGRGQGSGNGTTAGKGNNGQQSRSGYKRPIIEGGQVPVYRRLPKFGFTPLDKKPVNTVNLTQIDKWIQDGLVENEITILDLKSLLHASNADYFKILGNGELTSAITITAHAFSKSAEEKIAAAGGTVVKAFRTLEEASKVRDLPFEEALLKPKAKLVKRAKKSTKP.

Positions 1–45 (MDLSSLRPAKGAVKNKKRVGRGQGSGNGTTAGKGNNGQQSRSGYK) are disordered. Gly residues predominate over residues 21-35 (RGQGSGNGTTAGKGN).

Belongs to the universal ribosomal protein uL15 family. As to quaternary structure, part of the 50S ribosomal subunit.

Functionally, binds to the 23S rRNA. In Pelodictyon phaeoclathratiforme (strain DSM 5477 / BU-1), this protein is Large ribosomal subunit protein uL15.